Here is a 71-residue protein sequence, read N- to C-terminus: uncharacterized protein (71 aa).

This is an uncharacterized protein from Bacillus phage SPP1 (Bacteriophage SPP1).